Here is a 564-residue protein sequence, read N- to C-terminus: Phenylalanine--tRNA ligase beta subunit (564 aa).

The B5 domain maps to 286 to 362 (YFQNSLKINV…IGKGLDNFKS (77 aa)). Mg(2+)-binding residues include aspartate 340, aspartate 346, glutamate 349, and glutamate 350.

It belongs to the phenylalanyl-tRNA synthetase beta subunit family. Type 2 subfamily. In terms of assembly, tetramer of two alpha and two beta subunits. Requires Mg(2+) as cofactor.

Its subcellular location is the cytoplasm. It catalyses the reaction tRNA(Phe) + L-phenylalanine + ATP = L-phenylalanyl-tRNA(Phe) + AMP + diphosphate + H(+). The polypeptide is Phenylalanine--tRNA ligase beta subunit (Borrelia recurrentis (strain A1)).